We begin with the raw amino-acid sequence, 572 residues long: Methionine--tRNA ligase (572 aa).

The 'HIGH' region signature appears at Pro11 to Asn21. Zn(2+) is bound by residues Cys143, Cys146, Cys156, and Cys159. Positions Gln346–Ser350 match the 'KMSKS' region motif. Thr349 is a binding site for ATP.

Belongs to the class-I aminoacyl-tRNA synthetase family. MetG type 1 subfamily. As to quaternary structure, monomer. The cofactor is Zn(2+).

It localises to the cytoplasm. The catalysed reaction is tRNA(Met) + L-methionine + ATP = L-methionyl-tRNA(Met) + AMP + diphosphate. Functionally, is required not only for elongation of protein synthesis but also for the initiation of all mRNA translation through initiator tRNA(fMet) aminoacylation. The chain is Methionine--tRNA ligase from Cereibacter sphaeroides (strain ATCC 17025 / ATH 2.4.3) (Rhodobacter sphaeroides).